Here is a 791-residue protein sequence, read N- to C-terminus: Transient receptor potential cation channel subfamily V member 3 (791 aa).

3 disordered regions span residues 1 to 37 (MNAH…LTPT), 52 to 71 (PNPT…MDSN), and 76 to 113 (LSGN…EEQR). The Cytoplasmic segment spans residues 1–430 (MNAHSKEMAP…TLEPLHTLLH (430 aa)). Positions 95 to 105 (ETPSNPNSPSA) are enriched in polar residues. ANK repeat units lie at residues 117–148 (KRLK…LCRR), 170–198 (TCLM…EEND), 214–243 (EGQT…DVNA), 261–291 (FGET…DITS), 298–330 (NILH…RSGN), 340–362 (DGLT…YILS), and 398–420 (TTDN…HEML). A helical transmembrane segment spans residues 431 to 460 (TKWKKFAKYMFFLSFCFYFFYNITLTLVSY). At 461–479 (YRPREDEDLPHPLALTHKM) the chain is on the extracellular side. Residues 480 to 508 (SWLQLLGRMFVLIWATCISVKEGIAIFLL) traverse the membrane as a helical segment. Over 509-519 (RPSDLQSILSD) the chain is Cytoplasmic. A helical transmembrane segment spans residues 520–540 (AWFHFVFFVQAVLVILSVFLY). Topologically, residues 541-545 (LFAYK) are extracellular. A helical transmembrane segment spans residues 546–566 (EYLACLVLAMALGWANMLYYT). Over 567–569 (RGF) the chain is Cytoplasmic. A helical transmembrane segment spans residues 570–608 (QSMGMYSVMIQKVILHDVLKFLFVYILFLLGFGVALASL). Residues 609–620 (IEKCSKDKKDCS) are Extracellular-facing. The pore-forming intramembrane region spans 621-646 (SYGSFSDAVLELFKLTIGLGDLNIQQ). A Na(+)-binding site is contributed by Gly-638. At 647–649 (NST) the chain is on the extracellular side. A helical membrane pass occupies residues 650–686 (YPILFLFLLITYVILTFVLLLNMLIALMGETVENVSK). Topologically, residues 687-791 (ESERIWRLQR…ELDEFPETSV (105 aa)) are cytoplasmic.

It belongs to the transient receptor (TC 1.A.4) family. TrpV subfamily. TRPV3 sub-subfamily. In terms of assembly, homotetramer. May convert from a homotetramer to a homopentamer to allow pore dilation. Interacts with TRPV1; may form a heteromeric channel with TRPV1. Interacts with SNX11; this interaction promotes TRPV3 trafficking from the cell membrane to lysosome for degradation. In terms of tissue distribution, expressed in keratinocytes and hair follicles.

The protein resides in the cell membrane. It localises to the cytoplasm. Its subcellular location is the lysosome. The enzyme catalyses Ca(2+)(in) = Ca(2+)(out). It carries out the reaction Mg(2+)(in) = Mg(2+)(out). It catalyses the reaction Na(+)(in) = Na(+)(out). The catalysed reaction is K(+)(in) = K(+)(out). With respect to regulation, activated by cannabinoid that binds to the vanilloid binding pocket. Diphenylboronic anhydride induces pore dilation and enhances cation permeability by promoting the conversion to a homopentamer. Its function is as follows. Non-selective calcium permeant cation channel. It is activated by innocuous (warm) temperatures and shows an increased response at noxious temperatures greater than 39 degrees Celsius. Activation exhibits an outward rectification. The channel pore can dilate to provide permeability to larger cations. May associate with TRPV1 and may modulate its activity. Is a negative regulator of hair growth and cycling: TRPV3-coupled signaling suppresses keratinocyte proliferation in hair follicles and induces apoptosis and premature hair follicle regression (catagen). The protein is Transient receptor potential cation channel subfamily V member 3 (Trpv3) of Mus musculus (Mouse).